The sequence spans 316 residues: Diacylglycerol kinase (316 aa).

The 132-residue stretch at 1–132 (MRKRARIIYN…VDIGKMNNRY (132 aa)) folds into the DAGKc domain. ATP-binding positions include 10-14 (NPTSG), T41, 67-73 (GDGTLNE), and T94. 3 residues coordinate Mg(2+): K213, D216, and Y218. Catalysis depends on E273, which acts as the Proton acceptor.

Belongs to the diacylglycerol/lipid kinase family. In terms of assembly, homodimer. Mg(2+) is required as a cofactor.

The enzyme catalyses a 1,2-diacyl-sn-glycerol + ATP = a 1,2-diacyl-sn-glycero-3-phosphate + ADP + H(+). Its function is as follows. Catalyzes the phosphorylation of diacylglycerol (DAG) into phosphatidic acid. Is a key enzyme involved in the production of lipoteichoic acid by reintroducing DAG formed from the breakdown of membrane phospholipids into the phosphatidylglycerol biosynthetic pathway. This is Diacylglycerol kinase (dagK) from Staphylococcus epidermidis (strain ATCC 35984 / DSM 28319 / BCRC 17069 / CCUG 31568 / BM 3577 / RP62A).